We begin with the raw amino-acid sequence, 274 residues long: Type III pantothenate kinase (274 aa).

6 to 13 lines the ATP pocket; sequence DVGNTNTV. Substrate-binding positions include Tyr110 and 117 to 120; that span reads GADR. Asp119 functions as the Proton acceptor in the catalytic mechanism. A K(+)-binding site is contributed by Asp139. Thr142 contacts ATP. Thr194 provides a ligand contact to substrate.

This sequence belongs to the type III pantothenate kinase family. In terms of assembly, homodimer. Requires NH4(+) as cofactor. K(+) serves as cofactor.

The protein localises to the cytoplasm. It catalyses the reaction (R)-pantothenate + ATP = (R)-4'-phosphopantothenate + ADP + H(+). Its pathway is cofactor biosynthesis; coenzyme A biosynthesis; CoA from (R)-pantothenate: step 1/5. Functionally, catalyzes the phosphorylation of pantothenate (Pan), the first step in CoA biosynthesis. This chain is Type III pantothenate kinase, found in Koribacter versatilis (strain Ellin345).